The following is a 487-amino-acid chain: Zinc finger and BTB domain-containing protein 32 (487 aa).

The BTB domain occupies 29–87; the sequence is CDTLITVGSQEFPAHSLVLAGVSQQLGRRGQWALGEGISPSTFAQLLNFVYGESVELQP. Residues 112–166 are compositionally biased toward basic and acidic residues; the sequence is ARGDRAKKPDPGLKKHQEEPEKPSRNPERELGDPGEKQKPEQVSRTGGREQEMLH. Disordered stretches follow at residues 112–244 and 308–371; these read ARGD…TSVT and QNQL…ARSR. Polar residues predominate over residues 308–320; sequence QNQLASSSPTPGS. The segment covering 357–369 has biased composition (pro residues); it reads PPRPHPPPAPPAR. 3 consecutive C2H2-type zinc fingers follow at residues 373–395, 401–423, and 428–450; these read YACSVCGKRFSLKHQMETHYRVH, FSCSLCPQRSRDFSAMTKHLRTH, and YRCSLCGAGCPSLASMQAHMRGH. Positions 468 to 487 are disordered; that stretch reads SSSRPSRPSTSPCCPSSSTT.

It belongs to the krueppel C2H2-type zinc-finger protein family. As to quaternary structure, homodimer (via PTB domain). Interacts with the N-terminal of FANCC. Interacts with ZBTB16. Interacts with GATA3. Predominantly expressed in testis. Some isoforms are ubiquitously expressed.

Its subcellular location is the nucleus. Functionally, DNA-binding protein that binds to the to a 5'-TGTACAGTGT-3' core sequence. May function as a transcriptional transactivator and transcriptional repressor. Probably exerts its repressor effect by preventing GATA3 from binding to DNA. May play a role in regulating the differentiation and activation of helper T-cells. This Homo sapiens (Human) protein is Zinc finger and BTB domain-containing protein 32 (ZBTB32).